Here is a 970-residue protein sequence, read N- to C-terminus: Serine/threonine-protein kinase PLK4 (970 aa).

The region spanning 12–265 (FKVGNLLGKG…LSSVLDHPFM (254 aa)) is the Protein kinase domain. ATP contacts are provided by residues 18-26 (LGKGSFAGV) and lysine 41. Lysine 45 and lysine 46 each carry N6-acetyllysine. The Proton acceptor role is filled by aspartate 136. The disordered stretch occupies residues 324–373 (VFPKNKSSSDFSSSGDGNSFYTQWGNQETSNSGRGRVIQDAEERPHSRYL). Low complexity predominate over residues 327-343 (KNKSSSDFSSSGDGNSF). Residues 344 to 356 (YTQWGNQETSNSG) are compositionally biased toward polar residues. The segment covering 360–369 (VIQDAEERPH) has biased composition (basic and acidic residues). A Phosphoserine modification is found at serine 401. The segment at 498–540 (ISPTRDFQGHPDLQKDTSKNAWTDTKVKKNSDASDNAHSVKQP) is disordered. Over residues 504-515 (FQGHPDLQKDTS) the composition is skewed to basic and acidic residues. Polar residues predominate over residues 530-540 (ASDNAHSVKQP). Residues 586–699 (TLRSITSPLV…SRFVQLVRSK (114 aa)) enclose the Cryptic POLO box 1 (CPB1) domain. Serine 665 bears the Phosphoserine mark. The Cryptic POLO box 2 (CPB2) domain maps to 700–813 (SPKITYFTRY…GRKPGSTSSP (114 aa)). Residues 808 to 829 (GSTSSPKALSPPPSVDSNYPTR) form a disordered region. The residue at position 817 (serine 817) is a Phosphoserine. The POLO box domain occupies 886–964 (QLLKSVFVKN…LSSILLMFSN (79 aa)).

The protein belongs to the protein kinase superfamily. Ser/Thr protein kinase family. CDC5/Polo subfamily. Homodimer. Interacts with CEP152 (via N-terminus). Interacts with CEP78; this interaction may be important for proper PLK4 localization to the centriole and PLK4-induced overduplication of centrioles. Interacts with CEP131. Interacts simultaneously with TENT5C and CEP192. Interacts with TENT5C; this interaction leads to the TENT5C recruitment in the centrosome. Interacts with CEP85; this interaction may be important in cell migration and centriole assembly. Post-translationally, ubiquitinated; leading to its degradation by the proteasome. Deubiquitinated by USP54; leading to PLK4 stabilization. In terms of processing, tyrosine-phosphorylated by TEC. Acetylation by KAT2A and KAT2B impairs kinase activity by shifting the kinase to an inactive conformation.

It localises to the cytoplasm. It is found in the cytoskeleton. Its subcellular location is the microtubule organizing center. The protein resides in the centrosome. The protein localises to the centriole. It localises to the nucleus. It is found in the nucleolus. Its subcellular location is the cleavage furrow. It catalyses the reaction L-seryl-[protein] + ATP = O-phospho-L-seryl-[protein] + ADP + H(+). The catalysed reaction is L-threonyl-[protein] + ATP = O-phospho-L-threonyl-[protein] + ADP + H(+). In terms of biological role, serine/threonine-protein kinase that plays a central role in centriole duplication. Able to trigger procentriole formation on the surface of the parental centriole cylinder, leading to the recruitment of centriole biogenesis proteins such as SASS6, CPAP, CCP110, CEP135 and gamma-tubulin. When overexpressed, it is able to induce centrosome amplification through the simultaneous generation of multiple procentrioles adjoining each parental centriole during S phase. Phosphorylates 'Ser-151' of FBXW5 during the G1/S transition, leading to inhibit FBXW5 ability to ubiquitinate SASS6. Its central role in centriole replication suggests a possible role in tumorigenesis, centrosome aberrations being frequently observed in tumors. Also involved in deuterosome-mediated centriole amplification in multiciliated that can generate more than 100 centrioles. Also involved in trophoblast differentiation by phosphorylating HAND1, leading to disrupt the interaction between HAND1 and MDFIC and activate HAND1. Phosphorylates CDC25C and CHEK2. Required for the recruitment of STIL to the centriole and for STIL-mediated centriole amplification. Phosphorylates CEP131 and PCM1 which is essential for proper organization and integrity of centriolar satellites. In Pongo abelii (Sumatran orangutan), this protein is Serine/threonine-protein kinase PLK4.